Here is a 385-residue protein sequence, read N- to C-terminus: Protein-glutamate methylesterase/protein-glutamine glutaminase (385 aa).

One can recognise a Response regulatory domain in the interval 20–138 (RVMIVDDSVV…EASAADIFKH (119 aa)). 4-aspartylphosphate is present on Asp71. The 195-residue stretch at 189-383 (GVTAPRVLLI…PKLVRLFSGD (195 aa)) folds into the CheB-type methylesterase domain. Residues Ser201, His229, and Asp325 contribute to the active site.

It belongs to the CheB family. In terms of processing, phosphorylated by CheA. Phosphorylation of the N-terminal regulatory domain activates the methylesterase activity.

It is found in the cytoplasm. It catalyses the reaction [protein]-L-glutamate 5-O-methyl ester + H2O = L-glutamyl-[protein] + methanol + H(+). The enzyme catalyses L-glutaminyl-[protein] + H2O = L-glutamyl-[protein] + NH4(+). Involved in chemotaxis. Part of a chemotaxis signal transduction system that modulates chemotaxis in response to various stimuli. Catalyzes the demethylation of specific methylglutamate residues introduced into the chemoreceptors (methyl-accepting chemotaxis proteins or MCP) by CheR. Also mediates the irreversible deamidation of specific glutamine residues to glutamic acid. The sequence is that of Protein-glutamate methylesterase/protein-glutamine glutaminase from Rhodopseudomonas palustris (strain BisB5).